Reading from the N-terminus, the 212-residue chain is Nucleoside diphosphate kinase homolog 5 (212 aa).

The tract at residues 13–145 is NDK; that stretch reads EKTLAIIKPD…EREIRFMFPE (133 aa).

Belongs to the NDK family. In terms of assembly, component of the axonemal radial spoke complex 1 (RS1), at least composed of spoke head proteins RSPH1, RSPH3, RSPH9 and the cilia-specific component RSPH4A or sperm-specific component RSPH6A, spoke stalk proteins RSPH14, DNAJB13, DYDC1, ROPN1L and NME5, and the anchor protein IQUB. Interacts with IQUB. As to expression, specifically expressed in testis germinal cells.

The protein resides in the cell projection. It localises to the cilium. It is found in the cytoplasm. The protein localises to the cytoskeleton. Its subcellular location is the flagellum axoneme. Functionally, functions as part of axonemal radial spoke complexes that play an important part in the motility of sperm and cilia. Does not seem to have nucleoside diphosphate kinase (NDPK) activity. Confers protection from cell death by BAX and alters the cellular levels of several antioxidant enzymes including GPX5. May play a role in spermiogenesis by increasing the ability of late-stage spermatids to eliminate reactive oxygen species. Exhibits a 3'-5' exonuclease activity with a preference for single-stranded DNA, suggesting roles in DNA proofreading and repair. The chain is Nucleoside diphosphate kinase homolog 5 from Homo sapiens (Human).